A 242-amino-acid polypeptide reads, in one-letter code: Large ribosomal subunit protein uL2 (242 aa).

The disordered stretch occupies residues 201–242 (VDHPFGGGRHQHTGKPTTVSRKKVPPGRKVGHISARRTGVRK). A compositionally biased stretch (basic residues) spans 220-242 (SRKKVPPGRKVGHISARRTGVRK).

Belongs to the universal ribosomal protein uL2 family. Part of the 50S ribosomal subunit. Forms a bridge to the 30S subunit in the 70S ribosome.

Its function is as follows. One of the primary rRNA binding proteins. Required for association of the 30S and 50S subunits to form the 70S ribosome, for tRNA binding and peptide bond formation. It has been suggested to have peptidyltransferase activity; this is somewhat controversial. Makes several contacts with the 16S rRNA in the 70S ribosome. The protein is Large ribosomal subunit protein uL2 of Methanocaldococcus jannaschii (strain ATCC 43067 / DSM 2661 / JAL-1 / JCM 10045 / NBRC 100440) (Methanococcus jannaschii).